The primary structure comprises 438 residues: 3-phosphoshikimate 1-carboxyvinyltransferase (438 aa).

Residues Lys-26, Ser-27, and Arg-31 each coordinate 3-phosphoshikimate. Lys-26 contributes to the phosphoenolpyruvate binding site. 2 residues coordinate phosphoenolpyruvate: Gly-99 and Arg-127. Ser-170, Ser-171, Gln-172, Ser-199, Glu-314, and His-343 together coordinate 3-phosphoshikimate. Gln-172 is a binding site for phosphoenolpyruvate. The Proton acceptor role is filled by Glu-314. 3 residues coordinate phosphoenolpyruvate: Arg-347, Arg-388, and Lys-413.

It belongs to the EPSP synthase family. Monomer.

It is found in the cytoplasm. The enzyme catalyses 3-phosphoshikimate + phosphoenolpyruvate = 5-O-(1-carboxyvinyl)-3-phosphoshikimate + phosphate. The protein operates within metabolic intermediate biosynthesis; chorismate biosynthesis; chorismate from D-erythrose 4-phosphate and phosphoenolpyruvate: step 6/7. In terms of biological role, catalyzes the transfer of the enolpyruvyl moiety of phosphoenolpyruvate (PEP) to the 5-hydroxyl of shikimate-3-phosphate (S3P) to produce enolpyruvyl shikimate-3-phosphate and inorganic phosphate. The protein is 3-phosphoshikimate 1-carboxyvinyltransferase of Mycobacterium sp. (strain JLS).